The following is a 355-amino-acid chain: uncharacterized protein (355 aa).

This is an uncharacterized protein from Aquifex aeolicus (strain VF5).